The following is a 558-amino-acid chain: Oligo-1,6-glucosidase (558 aa).

4 residues coordinate Ca(2+): Asp21, Asn23, Asp25, and Asp29. Catalysis depends on Asp199, which acts as the Nucleophile. The active-site Proton donor is the Glu255.

The protein belongs to the glycosyl hydrolase 13 family.

The protein resides in the cytoplasm. It carries out the reaction Hydrolysis of (1-&gt;6)-alpha-D-glucosidic linkages in some oligosaccharides produced from starch and glycogen by alpha-amylase, and in isomaltose.. The polypeptide is Oligo-1,6-glucosidase (malL) (Bacillus cereus).